Reading from the N-terminus, the 102-residue chain is Aspartyl/glutamyl-tRNA(Asn/Gln) amidotransferase subunit C (102 aa).

This sequence belongs to the GatC family. Heterotrimer of A, B and C subunits.

The catalysed reaction is L-glutamyl-tRNA(Gln) + L-glutamine + ATP + H2O = L-glutaminyl-tRNA(Gln) + L-glutamate + ADP + phosphate + H(+). The enzyme catalyses L-aspartyl-tRNA(Asn) + L-glutamine + ATP + H2O = L-asparaginyl-tRNA(Asn) + L-glutamate + ADP + phosphate + 2 H(+). Functionally, allows the formation of correctly charged Asn-tRNA(Asn) or Gln-tRNA(Gln) through the transamidation of misacylated Asp-tRNA(Asn) or Glu-tRNA(Gln) in organisms which lack either or both of asparaginyl-tRNA or glutaminyl-tRNA synthetases. The reaction takes place in the presence of glutamine and ATP through an activated phospho-Asp-tRNA(Asn) or phospho-Glu-tRNA(Gln). This Bordetella pertussis (strain Tohama I / ATCC BAA-589 / NCTC 13251) protein is Aspartyl/glutamyl-tRNA(Asn/Gln) amidotransferase subunit C.